Here is a 222-residue protein sequence, read N- to C-terminus: Peptide methionine sulfoxide reductase MsrA 2 (222 aa).

C56 is an active-site residue.

It belongs to the MsrA Met sulfoxide reductase family.

It catalyses the reaction L-methionyl-[protein] + [thioredoxin]-disulfide + H2O = L-methionyl-(S)-S-oxide-[protein] + [thioredoxin]-dithiol. It carries out the reaction [thioredoxin]-disulfide + L-methionine + H2O = L-methionine (S)-S-oxide + [thioredoxin]-dithiol. Functionally, has an important function as a repair enzyme for proteins that have been inactivated by oxidation. Catalyzes the reversible oxidation-reduction of methionine sulfoxide in proteins to methionine. This chain is Peptide methionine sulfoxide reductase MsrA 2 (msrA2), found in Nostoc sp. (strain PCC 7120 / SAG 25.82 / UTEX 2576).